The chain runs to 1597 residues: Rho guanine nucleotide exchange factor 5 (1597 aa).

3 disordered regions span residues 138 to 246 (PFSS…EGTL), 258 to 455 (EEQM…SLEP), and 467 to 1072 (GSFL…VFRE). S184 is modified (phosphoserine). The segment covering 192–204 (ETNQNEGSESGTI) has biased composition (polar residues). Residues 217–237 (ESQGLLHPQEVQVLEEQGQQE) show a composition bias toward low complexity. The span at 266–278 (NDEKGEQKQKQEQ) shows a compositional bias: basic and acidic residues. A compositionally biased stretch (acidic residues) spans 299 to 309 (GLNDGEWEQED). Composition is skewed to basic and acidic residues over residues 323 to 368 (GEER…KEKG) and 394 to 404 (RSREEENEHHG). Over residues 428–438 (LMTQIPGTQTE) the composition is skewed to polar residues. Phosphoserine occurs at positions 445 and 450. The segment covering 474 to 490 (SPDKEIDQNSQQEESRL) has biased composition (basic and acidic residues). The segment covering 512–522 (PRTPDSAPPSP) has biased composition (pro residues). 2 stretches are compositionally biased toward polar residues: residues 583–601 (STGT…TVQH) and 655–682 (DYST…NLER). Over residues 731 to 746 (QRRDTHPSVVETDGHA) the composition is skewed to basic and acidic residues. Pro residues-rich tracts occupy residues 812-828 (PLPP…PPIS) and 838-856 (PLPP…PLPP). The residue at position 866 (R866) is an Asymmetric dimethylarginine. Residues 901–920 (ATARSTESFTSTSRSKSEVS) show a composition bias toward low complexity. Positions 926-941 (SNMTNFLCPSSPTTPW) are enriched in polar residues. Residues 950-969 (SKDEAGVSEHPEAPAREPLR) are compositionally biased toward basic and acidic residues. 3 positions are modified to phosphoserine: S983, S1011, and S1044. Residues 990 to 1012 (QPEKPSHLHLEKASSWPHRRDSG) are compositionally biased toward basic and acidic residues. Over residues 1057-1072 (AVEKHPGPSDTVVFRE) the composition is skewed to basic and acidic residues. Residue S1126 is modified to Phosphoserine. The 185-residue stretch at 1174–1358 (KLQEVKFELI…EQLIRDCNNN (185 aa)) folds into the DH domain. Residues 1390–1502 (WLVKSGELTA…WISALAMPRE (113 aa)) enclose the PH domain. The SH3 domain maps to 1510–1571 (YNSPQVQCLR…PVQQVEFISN (62 aa)).

As to quaternary structure, interacts with SRC. Forms a ternary complex with SRC and the PI3K 85 kDa subunit. Interacts with and is activated by the heterodimer formed by GNB1 and GNG2. Interacts with ODAM (via C-terminus). Interacts with RHOA. Activation of SRC induces tyrosine phosphorylation of ARHGEF5. Ubiquitously expressed with highest levels in placenta. High levels are also found in colon, kidney, trachea, prostate, liver, pancreas, pituitary gland, thyroid gland and mammary gland. In fetal tissues, expressed at high levels in kidney, lung and liver. Expressed at low levels in lung and heart.

The protein localises to the cytoplasm. The protein resides in the nucleus. Its subcellular location is the cell projection. It localises to the podosome. In terms of biological role, guanine nucleotide exchange factor which activates Rho GTPases. Strongly activates RHOA. Also strongly activates RHOB, weakly activates RHOC and RHOG and shows no effect on RHOD, RHOV, RHOQ or RAC1. Involved in regulation of cell shape and actin cytoskeletal organization. Plays a role in actin organization by generating a loss of actin stress fibers and the formation of membrane ruffles and filopodia. Required for SRC-induced podosome formation. Involved in positive regulation of immature dendritic cell migration. This Homo sapiens (Human) protein is Rho guanine nucleotide exchange factor 5 (ARHGEF5).